Consider the following 369-residue polypeptide: Methionine import ATP-binding protein MetN 1 (369 aa).

The segment at 1-26 (MTTMTVPPSLLPLEPFPTAPDTRAST) is disordered. An ABC transporter domain is found at 29-265 (IRLHGLGKRY…PRHAVTRSLL (237 aa)). 62 to 69 (GRSGAGKS) is a binding site for ATP.

The protein belongs to the ABC transporter superfamily. Methionine importer (TC 3.A.1.24) family. In terms of assembly, the complex is composed of two ATP-binding proteins (MetN), two transmembrane proteins (MetI) and a solute-binding protein (MetQ).

The protein localises to the cell inner membrane. It carries out the reaction L-methionine(out) + ATP + H2O = L-methionine(in) + ADP + phosphate + H(+). It catalyses the reaction D-methionine(out) + ATP + H2O = D-methionine(in) + ADP + phosphate + H(+). In terms of biological role, part of the ABC transporter complex MetNIQ involved in methionine import. Responsible for energy coupling to the transport system. The polypeptide is Methionine import ATP-binding protein MetN 1 (Pseudomonas aeruginosa (strain UCBPP-PA14)).